An 814-amino-acid polypeptide reads, in one-letter code: Outer membrane usher protein SefC (814 aa).

The first 30 residues, 1–30 (MKKTTITLFVLTSVFHSGNVFSRQYNFDYG), serve as a signal peptide directing secretion. An intrachain disulfide couples cysteine 792 to cysteine 813.

This sequence belongs to the fimbrial export usher family.

Its subcellular location is the cell outer membrane. Functionally, involved in the export and assembly of the SefA fimbrial subunit. The chain is Outer membrane usher protein SefC (sefC) from Salmonella enteritidis.